The chain runs to 122 residues: MLKYVVTDIGKMCLYIWPYRVWSWRRLFIFRVLNVVSIAILFETPHRLALVPNVCLYTHMAIPLSTCLFCLCLCICIKYDITQTQANNQRNLSLLFSVFHLVFSTIALSIYCIYQILILVKH.

The next 3 membrane-spanning stretches (helical) occupy residues 21–40 (VWSW…SIAI), 57–77 (YTHM…CICI), and 94–114 (LLFS…YCIY).

The protein resides in the membrane. This is an uncharacterized protein from Saccharomyces cerevisiae (strain ATCC 204508 / S288c) (Baker's yeast).